A 311-amino-acid chain; its full sequence is Thymidylate synthase (311 aa).

Residues Arg-28 and 172 to 173 (RR) each bind dUMP. Cys-192 serves as the catalytic Nucleophile. DUMP is bound by residues 213–216 (RSCD), Asn-224, and 254–256 (HLY). Asp-216 is a (6R)-5,10-methylene-5,6,7,8-tetrahydrofolate binding site. Ala-310 serves as a coordination point for (6R)-5,10-methylene-5,6,7,8-tetrahydrofolate.

This sequence belongs to the thymidylate synthase family. Bacterial-type ThyA subfamily. Homodimer.

The protein localises to the cytoplasm. It catalyses the reaction dUMP + (6R)-5,10-methylene-5,6,7,8-tetrahydrofolate = 7,8-dihydrofolate + dTMP. It participates in pyrimidine metabolism; dTTP biosynthesis. In terms of biological role, catalyzes the reductive methylation of 2'-deoxyuridine-5'-monophosphate (dUMP) to 2'-deoxythymidine-5'-monophosphate (dTMP) while utilizing 5,10-methylenetetrahydrofolate (mTHF) as the methyl donor and reductant in the reaction, yielding dihydrofolate (DHF) as a by-product. This enzymatic reaction provides an intracellular de novo source of dTMP, an essential precursor for DNA biosynthesis. The sequence is that of Thymidylate synthase from Sphingopyxis alaskensis (strain DSM 13593 / LMG 18877 / RB2256) (Sphingomonas alaskensis).